We begin with the raw amino-acid sequence, 118 residues long: Turripeptide NCR-01 (118 aa).

An N-terminal signal peptide occupies residues 1–16 (MLRLILAVALVAACLA). The interval 63 to 118 (QGFQGFLPQPHQKRDSYQHGGYQHQQSFDNFQGSGGMNNDNSDDSFALRNFNNDGY) is disordered. Positions 85 to 102 (QHQQSFDNFQGSGGMNND) are enriched in polar residues.

Expressed by the venom duct.

The protein localises to the secreted. The protein is Turripeptide NCR-01 of Gemmula speciosa (Splendid gem-turris).